The sequence spans 111 residues: Wound-induced proteinase inhibitor 1 (111 aa).

A signal peptide spans 1-23; sequence MEAKFAHIILFFLLAFSFETLMA. Residues 24-36 constitute a propeptide that is removed on maturation; that stretch reads RKESDGPEVIKLL.

This sequence belongs to the protease inhibitor I13 (potato type I serine protease inhibitor) family.

Its subcellular location is the secreted. The polypeptide is Wound-induced proteinase inhibitor 1 (Solanum peruvianum (Peruvian tomato)).